A 967-amino-acid polypeptide reads, in one-letter code: Isoleucine--tRNA ligase 2 (967 aa).

A 'HIGH' region motif is present at residues 58–68 (PYANGDIHIGH). Residues 430-463 (EADPGRADVTEEAGATGEARKVGKAEEAEEAGPV) are disordered. Residue E598 coordinates L-isoleucyl-5'-AMP. The 'KMSKS' region signature appears at 639–643 (KMSKS). Residue K642 coordinates ATP. Zn(2+)-binding residues include C922, C925, C942, and C945.

It belongs to the class-I aminoacyl-tRNA synthetase family. IleS type 1 subfamily. Monomer. Zn(2+) is required as a cofactor.

It is found in the cytoplasm. The catalysed reaction is tRNA(Ile) + L-isoleucine + ATP = L-isoleucyl-tRNA(Ile) + AMP + diphosphate. Catalyzes the attachment of isoleucine to tRNA(Ile). As IleRS can inadvertently accommodate and process structurally similar amino acids such as valine, to avoid such errors it has two additional distinct tRNA(Ile)-dependent editing activities. One activity is designated as 'pretransfer' editing and involves the hydrolysis of activated Val-AMP. The other activity is designated 'posttransfer' editing and involves deacylation of mischarged Val-tRNA(Ile). The sequence is that of Isoleucine--tRNA ligase 2 from Burkholderia pseudomallei (strain K96243).